A 74-amino-acid chain; its full sequence is CLAVATA3/ESR (CLE)-related protein 1 (74 aa).

The signal sequence occupies residues 1-22; that stretch reads MANLKFLLCLFLICVSLSRSSA. N-linked (GlcNAc...) asparagine glycosylation is present at N59. Hydroxyproline occurs at positions 66 and 69. P69 carries an O-linked (Ara...) hydroxyproline glycan.

The protein belongs to the CLV3/ESR signal peptide family. Post-translationally, the O-glycosylation (arabinosylation) of the hydroxyproline Pro-69 enhances binding affinity of the CLE1p peptide for its receptor. Mostly expressed in roots and seedlings, and, to a lower extent, in stems and apex.

It is found in the secreted. Its subcellular location is the extracellular space. Functionally, extracellular signal peptide that regulates cell fate. This is CLAVATA3/ESR (CLE)-related protein 1 from Arabidopsis thaliana (Mouse-ear cress).